A 384-amino-acid chain; its full sequence is 8-amino-7-oxononanoate synthase (384 aa).

A substrate-binding site is contributed by Arg-21. Pyridoxal 5'-phosphate is bound at residue 108–109; the sequence is GF. Position 133 (His-133) interacts with substrate. Pyridoxal 5'-phosphate contacts are provided by Ser-179, His-207, and Thr-233. The residue at position 236 (Lys-236) is an N6-(pyridoxal phosphate)lysine. A substrate-binding site is contributed by Thr-352.

It belongs to the class-II pyridoxal-phosphate-dependent aminotransferase family. BioF subfamily. As to quaternary structure, homodimer. Pyridoxal 5'-phosphate serves as cofactor.

It catalyses the reaction 6-carboxyhexanoyl-[ACP] + L-alanine + H(+) = (8S)-8-amino-7-oxononanoate + holo-[ACP] + CO2. The protein operates within cofactor biosynthesis; biotin biosynthesis. Its function is as follows. Catalyzes the decarboxylative condensation of pimeloyl-[acyl-carrier protein] and L-alanine to produce 8-amino-7-oxononanoate (AON), [acyl-carrier protein], and carbon dioxide. This chain is 8-amino-7-oxononanoate synthase, found in Shigella dysenteriae serotype 1 (strain Sd197).